The sequence spans 324 residues: Transcription factor MYB74 (324 aa).

HTH myb-type domains lie at 10-62 and 63-117; these read KNGL…TNYL and RPDI…RKRL. 2 DNA-binding regions (H-T-H motif) span residues 38-62 and 90-113; these read WRTL…TNYL and WSAI…NTHI.

As to expression, highly expressed in flowers and at lower levels in rosette leaves and cauline leaves. Expressed at low levels in roots, stems and siliques.

The protein localises to the nucleus. In terms of biological role, probable transcription factor that may function in salt stress response. The polypeptide is Transcription factor MYB74 (Arabidopsis thaliana (Mouse-ear cress)).